We begin with the raw amino-acid sequence, 436 residues long: Peptidase B (436 aa).

2 residues coordinate Mn(2+): Lys-201 and Asp-206. Lys-213 is a catalytic residue. Residues Asp-224, Asp-283, and Glu-285 each contribute to the Mn(2+) site. Arg-287 is a catalytic residue.

It belongs to the peptidase M17 family. Homohexamer. Mn(2+) serves as cofactor.

The protein resides in the cytoplasm. It catalyses the reaction Release of an N-terminal amino acid, Xaa, from a peptide or arylamide. Xaa is preferably Glu or Asp but may be other amino acids, including Leu, Met, His, Cys and Gln.. Functionally, probably plays an important role in intracellular peptide degradation. This chain is Peptidase B, found in Pectobacterium carotovorum subsp. carotovorum (strain PC1).